Consider the following 454-residue polypeptide: tRNA modification GTPase MnmE (454 aa).

The (6S)-5-formyl-5,6,7,8-tetrahydrofolate site is built by R23, E80, and K120. The 162-residue stretch at 216–377 (GMKVVIAGRP…LRDHLKQSMG (162 aa)) folds into the TrmE-type G domain. N226 serves as a coordination point for K(+). GTP-binding positions include 226 to 231 (NAGKSS), 245 to 251 (TDIAGTT), 270 to 273 (DTAG), 335 to 338 (NKAD), and 358 to 360 (SAR). S230 provides a ligand contact to Mg(2+). 3 residues coordinate K(+): T245, I247, and T250. T251 serves as a coordination point for Mg(2+). K454 serves as a coordination point for (6S)-5-formyl-5,6,7,8-tetrahydrofolate.

Belongs to the TRAFAC class TrmE-Era-EngA-EngB-Septin-like GTPase superfamily. TrmE GTPase family. As to quaternary structure, homodimer. Heterotetramer of two MnmE and two MnmG subunits. Requires K(+) as cofactor.

The protein resides in the cytoplasm. In terms of biological role, exhibits a very high intrinsic GTPase hydrolysis rate. Involved in the addition of a carboxymethylaminomethyl (cmnm) group at the wobble position (U34) of certain tRNAs, forming tRNA-cmnm(5)s(2)U34. This Yersinia pseudotuberculosis serotype IB (strain PB1/+) protein is tRNA modification GTPase MnmE.